The following is a 396-amino-acid chain: Succinyl-diaminopimelate desuccinylase (396 aa).

Residue H74 coordinates Zn(2+). Residue D76 is part of the active site. Zn(2+) is bound at residue D107. Catalysis depends on E142, which acts as the Proton acceptor. Residues E143, E171, and H360 each contribute to the Zn(2+) site.

It belongs to the peptidase M20A family. DapE subfamily. Homodimer. The cofactor is Zn(2+). Requires Co(2+) as cofactor.

The catalysed reaction is N-succinyl-(2S,6S)-2,6-diaminopimelate + H2O = (2S,6S)-2,6-diaminopimelate + succinate. The protein operates within amino-acid biosynthesis; L-lysine biosynthesis via DAP pathway; LL-2,6-diaminopimelate from (S)-tetrahydrodipicolinate (succinylase route): step 3/3. Functionally, catalyzes the hydrolysis of N-succinyl-L,L-diaminopimelic acid (SDAP), forming succinate and LL-2,6-diaminopimelate (DAP), an intermediate involved in the bacterial biosynthesis of lysine and meso-diaminopimelic acid, an essential component of bacterial cell walls. The sequence is that of Succinyl-diaminopimelate desuccinylase from Methylobacterium nodulans (strain LMG 21967 / CNCM I-2342 / ORS 2060).